Here is a 273-residue protein sequence, read N- to C-terminus: Diaminopimelate epimerase (273 aa).

Substrate is bound by residues asparagine 11 and asparagine 60. Cysteine 69 (proton donor) is an active-site residue. Residues 70–71, asparagine 181, and 199–200 each bind substrate; these read GN and ER. Cysteine 209 functions as the Proton acceptor in the catalytic mechanism. 210 to 211 contributes to the substrate binding site; the sequence is GT.

Belongs to the diaminopimelate epimerase family. As to quaternary structure, homodimer.

The protein localises to the cytoplasm. It carries out the reaction (2S,6S)-2,6-diaminopimelate = meso-2,6-diaminopimelate. It participates in amino-acid biosynthesis; L-lysine biosynthesis via DAP pathway; DL-2,6-diaminopimelate from LL-2,6-diaminopimelate: step 1/1. Catalyzes the stereoinversion of LL-2,6-diaminopimelate (L,L-DAP) to meso-diaminopimelate (meso-DAP), a precursor of L-lysine and an essential component of the bacterial peptidoglycan. In Helicobacter pylori (strain HPAG1), this protein is Diaminopimelate epimerase.